A 218-amino-acid chain; its full sequence is uncharacterized protein (218 aa).

A Toprim domain is found at 111 to 193 (NSIYLVEGDF…ITKVIEIKAA (83 aa)).

This is an uncharacterized protein from Mycoplasma genitalium (strain ATCC 33530 / DSM 19775 / NCTC 10195 / G37) (Mycoplasmoides genitalium).